A 288-amino-acid chain; its full sequence is Probable aquaporin PIP1-2 (288 aa).

The interval 1–37 (MEGKEEDVRLGANKFSERQPIGTAAQGSDDKDYKEPP) is disordered. 2 helical membrane-spanning segments follow: residues 57–77 (IAEF…VMGV) and 92–114 (IAWS…SGGH). Positions 116–118 (NPA) match the NPA 1 motif. The next 3 helical transmembrane spans lie at 135-155 (LFYM…VKGF), 177-197 (GDGL…VFSA), and 211-231 (ILAP…TIPI). The NPA 2 signature appears at 237–239 (NPA). A helical membrane pass occupies residues 259–279 (IFWVGPFIGAALAAIYHQVVI).

This sequence belongs to the MIP/aquaporin (TC 1.A.8) family. PIP (TC 1.A.8.11) subfamily. Expressed in roots, leaves and anthers.

It is found in the cell membrane. Functionally, aquaporins facilitate the transport of water and small neutral solutes across cell membranes. This chain is Probable aquaporin PIP1-2 (PIP1-2), found in Oryza sativa subsp. japonica (Rice).